The primary structure comprises 490 residues: Cytochrome P450 2C20 (490 aa).

Position 435 (cysteine 435) interacts with heme.

It belongs to the cytochrome P450 family. Requires heme as cofactor.

The protein localises to the endoplasmic reticulum membrane. It localises to the microsome membrane. The catalysed reaction is an organic molecule + reduced [NADPH--hemoprotein reductase] + O2 = an alcohol + oxidized [NADPH--hemoprotein reductase] + H2O + H(+). Functionally, cytochromes P450 are a group of heme-thiolate monooxygenases. In liver microsomes, this enzyme is involved in an NADPH-dependent electron transport pathway. It oxidizes a variety of structurally unrelated compounds, including steroids, fatty acids, and xenobiotics. The polypeptide is Cytochrome P450 2C20 (CYP2C20) (Macaca fascicularis (Crab-eating macaque)).